A 349-amino-acid polypeptide reads, in one-letter code: MQTTYLSMGSNIGDRQYYLHEAIRLLGKHPKIMIEKVSNFYESSPVGGVKQDDFTNLALKVATLLEPLELLDFIHEVELSLNRERKIHWGPRTIDIDIIFYGNSEIQEENLIVPHKEAFNRLFVLKPIFELLSNDFKYYEPIREAIAKLSESEQELHVIEEEKSPKNRIEEAVKEILFAVGENPNREGLLETPARVAKMYEEILSSQRLTNFNEYKLFEIDSSKNDSIVLIKDIPFYSMCEHHMLPFFGKAHVAYIPDGGRIIGLSKIPRLVNYVSRKLSVQENITHDIADILTDILKPKGVAVLVEGRHMCVEMRGVKKVNSLTKTSYFLGEFKENGEKRMEFLESLL.

The interval 1–226 is 2-amino-4-hydroxy-6-hydroxymethyldihydropteridine pyrophosphokinase; that stretch reads MQTTYLSMGS…LFEIDSSKND (226 aa). The segment at 226–349 is GTP cyclohydrolase 1; sequence DSIVLIKDIP…KRMEFLESLL (124 aa).

This sequence in the N-terminal section; belongs to the HPPK family. The protein in the C-terminal section; belongs to the GTP cyclohydrolase I family. In terms of assembly, homomer.

The enzyme catalyses 6-hydroxymethyl-7,8-dihydropterin + ATP = (7,8-dihydropterin-6-yl)methyl diphosphate + AMP + H(+). It catalyses the reaction GTP + H2O = 7,8-dihydroneopterin 3'-triphosphate + formate + H(+). It functions in the pathway cofactor biosynthesis; 7,8-dihydroneopterin triphosphate biosynthesis; 7,8-dihydroneopterin triphosphate from GTP: step 1/1. Its pathway is cofactor biosynthesis; tetrahydrofolate biosynthesis; 2-amino-4-hydroxy-6-hydroxymethyl-7,8-dihydropteridine diphosphate from 7,8-dihydroneopterin triphosphate: step 4/4. The protein is Bifunctional protein FolKE (folKE) of Lactococcus lactis subsp. cremoris (strain MG1363).